Here is an 879-residue protein sequence, read N- to C-terminus: DNA double-strand break repair Rad50 ATPase (879 aa).

ATP contacts are provided by residues 32–38 (NGAGKSS) and Gln-139. 2 coiled-coil regions span residues 184 to 304 (IELQ…NKIK) and 342 to 436 (EIKG…NQVK). The region spanning 394–492 (LQKLNEDLNN…LISELNQIIN (99 aa)) is the Zinc-hook domain. Residues Cys-440 and Cys-443 each contribute to the Zn(2+) site. The stretch at 502–722 (IRNLADYNNL…LITAYDKLKK (221 aa)) forms a coiled coil. Position 786-791 (786-791 (LLSGGE)) interacts with ATP.

Belongs to the SMC family. RAD50 subfamily. As to quaternary structure, homodimer. Forms a heterotetramer composed of two Mre11 subunits and two Rad50 subunits. It depends on Zn(2+) as a cofactor.

In terms of biological role, part of the Rad50/Mre11 complex, which is involved in the early steps of DNA double-strand break (DSB) repair. The complex may facilitate opening of the processed DNA ends to aid in the recruitment of HerA and NurA. Rad50 controls the balance between DNA end bridging and DNA resection via ATP-dependent structural rearrangements of the Rad50/Mre11 complex. The chain is DNA double-strand break repair Rad50 ATPase from Sulfurisphaera tokodaii (strain DSM 16993 / JCM 10545 / NBRC 100140 / 7) (Sulfolobus tokodaii).